A 529-amino-acid chain; its full sequence is Probable bifunctional tRNA threonylcarbamoyladenosine biosynthesis protein (529 aa).

The segment at 1-324 (MIVLGLEGTA…FRIDEVDAPW (324 aa)) is kae1. Positions 107, 111, and 128 each coordinate Fe cation. L-threonylcarbamoyladenylate is bound by residues 128 to 132 (YVSGG), aspartate 160, glycine 173, glutamate 177, and asparagine 257. Aspartate 285 is a binding site for Fe cation. The region spanning 329–529 (SRKDYGKAGA…SAIRRRHRYV (201 aa)) is the Protein kinase domain. ATP contacts are provided by residues 335 to 342 (KAGAESRI) and lysine 355. Aspartate 447 (proton acceptor; for kinase activity) is an active-site residue.

It in the N-terminal section; belongs to the KAE1 / TsaD family. This sequence in the C-terminal section; belongs to the protein kinase superfamily. Tyr protein kinase family. BUD32 subfamily. In terms of assembly, component of the KEOPS complex that consists of Kae1, Bud32, Cgi121 and Pcc1; the whole complex dimerizes. It depends on Fe(2+) as a cofactor.

Its subcellular location is the cytoplasm. The catalysed reaction is L-seryl-[protein] + ATP = O-phospho-L-seryl-[protein] + ADP + H(+). The enzyme catalyses L-threonyl-[protein] + ATP = O-phospho-L-threonyl-[protein] + ADP + H(+). It catalyses the reaction L-threonylcarbamoyladenylate + adenosine(37) in tRNA = N(6)-L-threonylcarbamoyladenosine(37) in tRNA + AMP + H(+). Its function is as follows. Required for the formation of a threonylcarbamoyl group on adenosine at position 37 (t(6)A37) in tRNAs that read codons beginning with adenine. Is a component of the KEOPS complex that is probably involved in the transfer of the threonylcarbamoyl moiety of threonylcarbamoyl-AMP (TC-AMP) to the N6 group of A37. The Kae1 domain likely plays a direct catalytic role in this reaction. The Bud32 domain probably displays kinase activity that regulates Kae1 function. The protein is Probable bifunctional tRNA threonylcarbamoyladenosine biosynthesis protein of Thermoplasma acidophilum (strain ATCC 25905 / DSM 1728 / JCM 9062 / NBRC 15155 / AMRC-C165).